The sequence spans 558 residues: MPSRRAARESAPELGALGSSDLSSLSLTVSRTTDELEIIDEYIKENGFGLDGTQLSEMPRLVPRGPASLSSVTLGPAAPPPPATPSWSCTLGRLVSPGPCPRPYLVITEQPKQRGMRFRYECEGRSAGSILGESSTEASKTLPAIELRDCGGLREVEVTACLVWKDWPHRVHPHSLVGKDCTDGVCRVRLRPHVSPRHSFNNLGIQCVRKKEIEAAIERKIQLGIDPYNAGSLKNHQEVDMNVVRICFQASYRDQQGHLHRMDPILSEPVYDKKSTNTSELRICRINKESGPCTGGEELYLLCDKVQKEDISVVFSTASWEGRADFSQADVHRQIAIVFKTPPYEDLEISEPVTVNVFLQRLTDGVCSEPLPFTYLPRDHDSYGVDKKRKRGLPDVLGELSSSDPHGIESKRRKKKPVFLDHFLPGHSSGLFLPPSALQPADSDFFPASISLPGLEPPGGPDLLDDGFAYDPSAPTLFTMLDLLPPAPPLASAVVGSGGAGATVVESSGPEPLSLDSFAAPGPGDVGTASLVGSNMFPNQYREAAFGGGLLSPGPEAT.

The span at 1-11 (MPSRRAARESA) shows a compositional bias: basic and acidic residues. Residues 1-21 (MPSRRAARESAPELGALGSSD) are disordered. At serine 19 the chain carries Phosphoserine. Residues 22–50 (LSSLSLTVSRTTDELEIIDEYIKENGFGL) form a leucine-zipper region. Phosphothreonine is present on threonine 84. Positions 103 to 418 (PYLVITEQPK…ESKRRKKKPV (316 aa)) constitute an RHD domain. 2 short sequence motifs (nuclear localization signal) span residues 387–391 (KKRKR) and 411–416 (KRRKKK). Serine 552 carries the phosphoserine modification.

As to quaternary structure, component of the NF-kappa-B RelB-p50 complex. Component of the NF-kappa-B RelB-p52 complex. Self-associates; the interaction seems to be transient and may prevent degradation allowing for heterodimer formation p50 or p52. Interacts with NFKB1/p50, NFKB2/p52 and NFKB2/p100. Interacts with NFKBID. Interacts with BMAL1 and the interaction is enhanced in the presence of CLOCK. Phosphorylation at 'Thr-103' and 'Ser-573' is followed by proteasomal degradation. As to expression, expressed in intestine, thymus and spleen. Undetectable in liver, bome marrow, kidney and testis.

The protein localises to the nucleus. The protein resides in the cytoplasm. It is found in the cytoskeleton. It localises to the microtubule organizing center. Its subcellular location is the centrosome. In terms of biological role, NF-kappa-B is a pleiotropic transcription factor which is present in almost all cell types and is involved in many biological processed such as inflammation, immunity, differentiation, cell growth, tumorigenesis and apoptosis. NF-kappa-B is a homo- or heterodimeric complex formed by the Rel-like domain-containing proteins RELA/p65, RELB, NFKB1/p105, NFKB1/p50, REL and NFKB2/p52. The dimers bind at kappa-B sites in the DNA of their target genes and the individual dimers have distinct preferences for different kappa-B sites that they can bind with distinguishable affinity and specificity. Different dimer combinations act as transcriptional activators or repressors, respectively. NF-kappa-B is controlled by various mechanisms of post-translational modification and subcellular compartmentalization as well as by interactions with other cofactors or corepressors. NF-kappa-B complexes are held in the cytoplasm in an inactive state complexed with members of the NF-kappa-B inhibitor (I-kappa-B) family. In a conventional activation pathway, I-kappa-B is phosphorylated by I-kappa-B kinases (IKKs) in response to different activators, subsequently degraded thus liberating the active NF-kappa-B complex which translocates to the nucleus. NF-kappa-B heterodimeric RelB-p50 and RelB-p52 complexes are transcriptional activators. RELB neither associates with DNA nor with RELA/p65 or REL. Stimulates promoter activity in the presence of NFKB2/p49. As a member of the NUPR1/RELB/IER3 survival pathway, may allow the development of pancreatic intraepithelial neoplasias. Regulates the circadian clock by repressing the transcriptional activator activity of the CLOCK-BMAL1 heterodimer in a CRY1/CRY2 independent manner. Increased repression of the heterodimer is seen in the presence of NFKB2/p52. Is required for both T and B lymphocyte maturation and function. This is Transcription factor RelB (Relb) from Mus musculus (Mouse).